Reading from the N-terminus, the 249-residue chain is ATP synthase subunit a (249 aa).

A run of 6 helical transmembrane segments spans residues A29–S49, F84–F104, I114–Y134, F140–I160, F193–I213, and V216–L236.

Belongs to the ATPase A chain family. F-type ATPases have 2 components, CF(1) - the catalytic core - and CF(0) - the membrane proton channel. CF(1) has five subunits: alpha(3), beta(3), gamma(1), delta(1), epsilon(1). CF(0) has three main subunits: a(1), b(2) and c(9-12). The alpha and beta chains form an alternating ring which encloses part of the gamma chain. CF(1) is attached to CF(0) by a central stalk formed by the gamma and epsilon chains, while a peripheral stalk is formed by the delta and b chains.

Its subcellular location is the cell inner membrane. Functionally, key component of the proton channel; it plays a direct role in the translocation of protons across the membrane. The chain is ATP synthase subunit a from Agrobacterium fabrum (strain C58 / ATCC 33970) (Agrobacterium tumefaciens (strain C58)).